The following is a 623-amino-acid chain: MPAREVYLKRPATRRQLEGICTRYDGQQRITQLDCEEGCSKRTQPPQRLNPRYKSPDLIHISFIIVLLCILSMTSSVVAQTTTGSSSSKAAATPILPRQTLPTTISLPPLNISHPVLQLALPPTSSLYLTFSICSLTSNATILPTVLISTSSPASFNLGSKPIRDASTGGIPTSSGGKGYNYKSGRNGATWGLKWSSGFGNWTLNGTSETQVHLLLGLGLGNDGSTLNTTGVGNGNVVVQMGASTSGPLHALSAVYPLLGDTTSTSALIFSPLLYSSPQPEPSYPNYTLPGAQLAFPDFSYSEPLNSSLSSNLTLIVVPTNASPTSTDLGNSICAINAASANSSVSGANNTILKSFQPEWMTVGDEQGFRSYWVLGDLAEQGNYTAWVSDDKGVLSQPAWFATKPAGFPCQLVMPNDVCPNLGYSAPLDANSTAVTSPSGATISPTSPIQTLPDDLLELIVQNLEAFSTSLLSHACGRDLFSHVSSCLDCYSAYRDWLCRIVVPQCGAANSTSGATVIETATSTSTSSGTFPTPSTVLRTPSSPRNPSLPIPAYSYYELLPCMSTCNRADRSCPVSMGIRCPKRKVNAAKSYAFVGDDHSYGDGSAAQGVAAQDRWGNRWCNG.

Topologically, residues 1–57 are extracellular; that stretch reads MPAREVYLKRPATRRQLEGICTRYDGQQRITQLDCEEGCSKRTQPPQRLNPRYKSPD. Residues 58–78 traverse the membrane as a helical segment; sequence LIHISFIIVLLCILSMTSSVV. The Cytoplasmic segment spans residues 79 to 623; the sequence is AQTTTGSSSS…DRWGNRWCNG (545 aa). The span at 524-536 shows a compositional bias: low complexity; that stretch reads TSTSSGTFPTPST. A disordered region spans residues 524–544; it reads TSTSSGTFPTPSTVLRTPSSP. The interval 600 to 623 is required for targeting to the cell membrane; that stretch reads SYGDGSAAQGVAAQDRWGNRWCNG.

As to quaternary structure, forms an oligomer by disulfide bonds. Interacts with CCH1 to form a Ca(2+) influx channel. Interacts (via C-terminus) with CCP1/cytochrome c peroxidase; the interaction may contribute to cellular detoxification of radicals.

Its subcellular location is the cell membrane. Calcium-permeable, cation-selective stretch-activated channel (SAC) that functions together with CCH1 to mediate calcium entry into cells. May additionally play a role in cellular detoxification of radicals. This chain is Stretch-activated cation channel MID1, found in Cryptococcus neoformans var. grubii serotype A (strain H99 / ATCC 208821 / CBS 10515 / FGSC 9487) (Filobasidiella neoformans var. grubii).